Consider the following 305-residue polypeptide: Tyrosine recombinase XerC (305 aa).

A Core-binding (CB) domain is found at threonine 4–glutamate 95. Residues leucine 116–threonine 298 form the Tyr recombinase domain. Active-site residues include arginine 159, lysine 182, histidine 250, arginine 253, and histidine 276. Tyrosine 285 functions as the O-(3'-phospho-DNA)-tyrosine intermediate in the catalytic mechanism.

Belongs to the 'phage' integrase family. XerC subfamily. In terms of assembly, forms a cyclic heterotetrameric complex composed of two molecules of XerC and two molecules of XerD.

The protein resides in the cytoplasm. Functionally, site-specific tyrosine recombinase, which acts by catalyzing the cutting and rejoining of the recombining DNA molecules. The XerC-XerD complex is essential to convert dimers of the bacterial chromosome into monomers to permit their segregation at cell division. It also contributes to the segregational stability of plasmids. The sequence is that of Tyrosine recombinase XerC from Rickettsia peacockii (strain Rustic).